Here is a 312-residue protein sequence, read N- to C-terminus: Glycine--tRNA ligase alpha subunit (312 aa).

Belongs to the class-II aminoacyl-tRNA synthetase family. In terms of assembly, tetramer of two alpha and two beta subunits.

The protein localises to the cytoplasm. It carries out the reaction tRNA(Gly) + glycine + ATP = glycyl-tRNA(Gly) + AMP + diphosphate. This is Glycine--tRNA ligase alpha subunit from Delftia acidovorans (strain DSM 14801 / SPH-1).